A 196-amino-acid polypeptide reads, in one-letter code: uncharacterized protein (196 aa).

A Macro domain is found at 1–183; that stretch reads MREFHYGVHM…RFLFILSDLG (183 aa).

Belongs to the MacroD-type family.

This is an uncharacterized protein from Thermoplasma acidophilum (strain ATCC 25905 / DSM 1728 / JCM 9062 / NBRC 15155 / AMRC-C165).